Here is a 1116-residue protein sequence, read N- to C-terminus: Protein STICHEL-like 1 (1116 aa).

2 disordered regions span residues 95–138 (RTSS…LEET) and 225–244 (KFLR…NSTP). Residues 115–124 (NDDDDDDDDV) show a composition bias toward acidic residues. Short sequence motifs (PEST) lie at residues 257-282 (RNPS…FKGR) and 402-422 (KSQD…ESIQ). 463 to 470 (GPRGTGKT) provides a ligand contact to ATP. Positions 482, 492, 495, and 498 each coordinate Zn(2+). Residues 726–760 (EAFLDRRNLTEADLERLKHALKLLSEAEKQLRVST) adopt a coiled-coil conformation. The interval 777–798 (PSPGTTHTGSSRRQSSRATEES) is disordered. Positions 778–793 (SPGTTHTGSSRRQSSR) are enriched in polar residues.

This sequence belongs to the DnaX/STICHEL family.

The protein is Protein STICHEL-like 1 of Arabidopsis thaliana (Mouse-ear cress).